The sequence spans 100 residues: Integration host factor subunit alpha (100 aa).

This sequence belongs to the bacterial histone-like protein family. In terms of assembly, heterodimer of an alpha and a beta chain.

In terms of biological role, this protein is one of the two subunits of integration host factor, a specific DNA-binding protein that functions in genetic recombination as well as in transcriptional and translational control. The polypeptide is Integration host factor subunit alpha (Hahella chejuensis (strain KCTC 2396)).